Reading from the N-terminus, the 794-residue chain is Lon protease (794 aa).

Residues 13–204 (VPLYPLREII…KVYMHLTNEV (192 aa)) enclose the Lon N-terminal domain. Residue 356–363 (GPPGVGKT) participates in ATP binding. The Lon proteolytic domain maps to 592–773 (KDRVGVATGL…REVFVQALNP (182 aa)). Catalysis depends on residues serine 679 and lysine 722. The segment covering 774-788 (TSPAPTAATSARTPA) has biased composition (low complexity). Positions 774 to 794 (TSPAPTAATSARTPAGAPPPQ) are disordered.

The protein belongs to the peptidase S16 family. As to quaternary structure, homohexamer. Organized in a ring with a central cavity.

The protein resides in the cytoplasm. It catalyses the reaction Hydrolysis of proteins in presence of ATP.. Functionally, ATP-dependent serine protease that mediates the selective degradation of mutant and abnormal proteins as well as certain short-lived regulatory proteins. Required for cellular homeostasis and for survival from DNA damage and developmental changes induced by stress. Degrades polypeptides processively to yield small peptide fragments that are 5 to 10 amino acids long. Binds to DNA in a double-stranded, site-specific manner. The sequence is that of Lon protease from Citrifermentans bemidjiense (strain ATCC BAA-1014 / DSM 16622 / JCM 12645 / Bem) (Geobacter bemidjiensis).